A 198-amino-acid chain; its full sequence is Nucleoid occlusion factor SlmA (198 aa).

An HTH tetR-type domain is found at 9 to 70 (RNRREEILQA…SLIEFIEDSL (62 aa)). Positions 33–52 (TTAKLAANVGVSEAALYRHF) form a DNA-binding region, H-T-H motif. The stretch at 113–144 (ALMFEQDRLQDRINQLFERIESQLRQVLREHK) forms a coiled coil.

It belongs to the nucleoid occlusion factor SlmA family. In terms of assembly, homodimer. Interacts with FtsZ.

Its subcellular location is the cytoplasm. It localises to the nucleoid. Functionally, required for nucleoid occlusion (NO) phenomenon, which prevents Z-ring formation and cell division over the nucleoid. Acts as a DNA-associated cell division inhibitor that binds simultaneously chromosomal DNA and FtsZ, and disrupts the assembly of FtsZ polymers. SlmA-DNA-binding sequences (SBS) are dispersed on non-Ter regions of the chromosome, preventing FtsZ polymerization at these regions. The protein is Nucleoid occlusion factor SlmA of Pectobacterium carotovorum subsp. carotovorum (strain PC1).